Here is a 388-residue protein sequence, read N- to C-terminus: S-adenosylmethionine synthase (388 aa).

His-17 provides a ligand contact to ATP. Position 19 (Asp-19) interacts with Mg(2+). Glu-45 is a binding site for K(+). L-methionine contacts are provided by Glu-58 and Gln-102. Residues 102-112 (QSVHIAQGVDA) are flexible loop. ATP is bound by residues 167–169 (DAK), Asp-241, 247–248 (RK), Ala-264, and Lys-268. Asp-241 provides a ligand contact to L-methionine. Lys-272 serves as a coordination point for L-methionine.

Belongs to the AdoMet synthase family. In terms of assembly, homotetramer; dimer of dimers. It depends on Mg(2+) as a cofactor. K(+) is required as a cofactor.

It localises to the cytoplasm. It catalyses the reaction L-methionine + ATP + H2O = S-adenosyl-L-methionine + phosphate + diphosphate. It participates in amino-acid biosynthesis; S-adenosyl-L-methionine biosynthesis; S-adenosyl-L-methionine from L-methionine: step 1/1. Functionally, catalyzes the formation of S-adenosylmethionine (AdoMet) from methionine and ATP. The overall synthetic reaction is composed of two sequential steps, AdoMet formation and the subsequent tripolyphosphate hydrolysis which occurs prior to release of AdoMet from the enzyme. The protein is S-adenosylmethionine synthase of Maricaulis maris (strain MCS10) (Caulobacter maris).